Reading from the N-terminus, the 200-residue chain is Putative protein ATXN8OS (200 aa).

The segment at 19–39 (PFSGLKEEEEEDGEDDEEEEE) is disordered. Over residues 25–39 (EEEEEDGEDDEEEEE) the composition is skewed to acidic residues.

In terms of tissue distribution, expressed in brain. Expressed in muscle tissues (at protein level).

Its subcellular location is the cytoplasm. The protein is Putative protein ATXN8OS of Homo sapiens (Human).